The sequence spans 547 residues: Glucose-6-phosphate isomerase (547 aa).

Glu-354 (proton donor) is an active-site residue. Catalysis depends on residues His-385 and Lys-513.

Belongs to the GPI family.

It localises to the cytoplasm. It carries out the reaction alpha-D-glucose 6-phosphate = beta-D-fructose 6-phosphate. It participates in carbohydrate biosynthesis; gluconeogenesis. Its pathway is carbohydrate degradation; glycolysis; D-glyceraldehyde 3-phosphate and glycerone phosphate from D-glucose: step 2/4. Functionally, catalyzes the reversible isomerization of glucose-6-phosphate to fructose-6-phosphate. The polypeptide is Glucose-6-phosphate isomerase (Erwinia tasmaniensis (strain DSM 17950 / CFBP 7177 / CIP 109463 / NCPPB 4357 / Et1/99)).